Consider the following 196-residue polypeptide: DnaA initiator-associating protein DiaA (196 aa).

Positions 34–196 (LVQSLLNGNK…DNTLFPHQND (163 aa)) constitute an SIS domain.

It belongs to the SIS family. DiaA subfamily. Homotetramer; dimer of dimers.

Its function is as follows. Required for the timely initiation of chromosomal replication via direct interactions with the DnaA initiator protein. The sequence is that of DnaA initiator-associating protein DiaA from Yersinia pestis bv. Antiqua (strain Antiqua).